Reading from the N-terminus, the 506-residue chain is ATP synthase subunit alpha (506 aa).

Basic and acidic residues predominate over residues 119 to 129 (GPIEYEGKRPI). The disordered stretch occupies residues 119–138 (GPIEYEGKRPIESPAPPIVR). 169-176 (GDRQTGKT) is a binding site for ATP.

The protein belongs to the ATPase alpha/beta chains family. In terms of assembly, F-type ATPases have 2 components, CF(1) - the catalytic core - and CF(0) - the membrane proton channel. CF(1) has five subunits: alpha(3), beta(3), gamma(1), delta(1), epsilon(1). CF(0) has three main subunits: a(1), b(2) and c(9-12). The alpha and beta chains form an alternating ring which encloses part of the gamma chain. CF(1) is attached to CF(0) by a central stalk formed by the gamma and epsilon chains, while a peripheral stalk is formed by the delta and b chains.

Its subcellular location is the cell membrane. The enzyme catalyses ATP + H2O + 4 H(+)(in) = ADP + phosphate + 5 H(+)(out). In terms of biological role, produces ATP from ADP in the presence of a proton gradient across the membrane. The alpha chain is a regulatory subunit. In Caldanaerobacter subterraneus subsp. tengcongensis (strain DSM 15242 / JCM 11007 / NBRC 100824 / MB4) (Thermoanaerobacter tengcongensis), this protein is ATP synthase subunit alpha.